The primary structure comprises 226 residues: Small ribosomal subunit protein uS2c (226 aa).

It belongs to the universal ribosomal protein uS2 family.

It is found in the plastid. It localises to the chloroplast. This is Small ribosomal subunit protein uS2c (rps2) from Phaeodactylum tricornutum (strain CCAP 1055/1).